The sequence spans 1038 residues: MASESVKVVVRCRPMNKRERELSCQSVVTVDSARGQCFIQNPGAADEPPKQFTFDGAYYIEHFTEQIYNEIAYPLVEGVTEGYNGTIFAYGQTGSGKSFTMQGLPDPPCQRGIIPRAFEHVFESVQCAENTKFLVRASYLEIYNEDVHDLLGADTKQRLELKEHPEKGVYVKGLSMHTVHNVAQCERVMETGWKNRAVGYTLMNKDSSRSHSIFTINIEIYAVDERGKDHLRAGKLNLVDLAGSERQSKTGATGERLKEATKINLSLSALGNVISALVDGRCKHIPYRDSKLTRLLQDSLGGNTKTLMVACLSPADNNYDETLSTLRYANRAKNIKNKPRINEDPKDALLREYQEEIKRLKAILAQQMGPGNLSALLSTQTPPGPVQSEEKLLSPTTVQQDTEAEKQLIREEYEERLARLKADYEAEQESRVRLQEDITAMRNSYDVKLSTLQENLRKEKETEAILKAEVLCKTEVMSRAELASGPEYSPPLQYETAVKPTILSMPDMPPSGKVTKSQAPLAFEEPHGETSRSEFSFESNECSTLEDSATSEAFPGPEEFSNMEFSMAAALTESRYLPEEYLGGQEAAASPLEAERYVQENEPSLEPLRILASLQDPFAEVEAKLARLSSTVAMSDSSQTVVPQIPKQPSSADLLEPSDTKSEADVAVADNVVLGTEPDVNLRVAEEVVSEAETGVWMESEAQVAHVAQVSEEAQPQPLLAMVSVRRESVGVEVAVLTEEELQPVDQQQVLARLQLLEQQVVGGEQAKNKDLREKHKRRKRYADERKKQLVAALQNSDEDGGDWVLLNVYDSIQEEVRAKSKLLEKMQRKLRAAEVEIKDLQSEFQLEKIDYLATIRRQERDSMLFQQLLEQVQPLIRRDCNYSNLEKIRRESSWDEDNGFWKIPDPIILKTSLPVVPTGTQNKPARKTSAVDSGEPHMQEEDRYKLMLSRSDSENIASNYFRSKRASQILSTDPMKSLTYHNSPPGLNSSLSNNSALPPTQTPEMPQPRPFRLESLDIPFSKAKRKKSKNSFGGEPL.

One can recognise a Kinesin motor domain in the interval Ser5–Ile335. An ATP-binding site is contributed by Gly91–Ser98. Positions Lys346 to Val470 form a coiled coil. Disordered stretches follow at residues Thr379–Asp401, Leu503–Glu559, and Asp636–Pro657. Composition is skewed to polar residues over residues Ser533–Ser551 and Asp636–Ser651. Residues Gln748 to Thr855 are a coiled coil. 2 disordered regions span residues Val916–Gln940 and Met976–Leu1038. The segment covering Asn983–Pro1000 has biased composition (low complexity).

It belongs to the TRAFAC class myosin-kinesin ATPase superfamily. Kinesin family. In terms of assembly, homodimer. Interacts with APBA1 (via PDZ domain); the interaction is direct and is required for association of KIF17 with the cargo that is to be transported. Interacts with IFT B complex components IFT52 and IFT57. Interacts with IFT70B. Interacts with PIWIL1. Interacts with TBATA. Highly expressed in the gray matter of the brain, especially in the hippocampus.

The protein localises to the cytoplasm. Its subcellular location is the cytoskeleton. The protein resides in the cell projection. It localises to the cilium. It is found in the dendrite. Dendrite-specific motor protein which, in association with the Apba1-containing complex (LIN-10-LIN-2-LIN-7 complex), transports vesicles containing N-methyl-D-aspartate (NMDA) receptor subunit NR2B along microtubules. This is Kinesin-like protein KIF17 (Kif17) from Mus musculus (Mouse).